The following is a 267-amino-acid chain: MESLSLKFIEPYWFKFVDYYGEEFLLTYGTFIAHQVFYFGCFIPFLIADFIPFFRKYKIQQTKENDWKSQTYCAIKVILTQVLIQLPMMYIFDPAIKAIGLSARAPLPSIPYLLLTLVSSFIIEDFYFYWAHRALHHGIWYKYIHKVHHDYASPFGITAEYAHPLETIILGVGTVIGPFLFSRDLFTLWVWLGVRLYQTVECHSGYDFPWSFTNLIPFWGGAPFHDYHHEVFIGNYASTFTYLDKIFGTSGKSYYSRIEKKSINKSE.

The next 3 helical transmembrane spans lie at 31 to 51, 72 to 92, and 110 to 130; these read FIAH…ADFI, YCAI…MYIF, and IPYL…YFYW. Residues 119 to 249 form the Fatty acid hydroxylase domain; the sequence is SSFIIEDFYF…FTYLDKIFGT (131 aa). The Histidine box-1 motif lies at 132–136; it reads HRALH. The Histidine box-2 motif lies at 145–149; sequence HKVHH. A Histidine box-3 motif is present at residues 224–230; it reads FHDYHHE.

This sequence belongs to the sterol desaturase family. Fe cation serves as cofactor.

It localises to the endoplasmic reticulum membrane. The enzyme catalyses 4,4-dimethyl-5alpha-cholest-7-en-3beta-ol + 6 Fe(II)-[cytochrome b5] + 3 O2 + 5 H(+) = 4alpha-carboxy-4beta-methyl-5alpha-cholest-7-ene-3beta-ol + 6 Fe(III)-[cytochrome b5] + 4 H2O. It participates in steroid biosynthesis; zymosterol biosynthesis; zymosterol from lanosterol: step 3/6. This is Putative methylsterol monooxygenase DDB_G0270946 from Dictyostelium discoideum (Social amoeba).